A 297-amino-acid polypeptide reads, in one-letter code: MANVVNMNSLLNGKDSRWLQLEVCREFQRNKCSRQDTECKFAHPPANVEVQNGKVTACYDSIKGRCNRDKPPCKYFHPPQHLKDQLLINGRNHLALKNALMQQMGIAPGQPVISGQVPAVATNPYLTGIPANSYSPYYTTGHLVPALLGPDPVTSQLGPVVPQTVQVAQQKIPRSDRLETSPLAAHHHQQQQQLQHQLNNINNNNNHSTAGAAATSTTATTTTNNAAAAAAAAAAAAAAAVMGHHTLEVGKKRAADTTDMFPLVFFCSFPSPCVFAFLNCSIFGFLRLWFSLFNLRH.

C3H1-type zinc fingers lie at residues 18–46 and 52–80; these read WLQLEVCREFQRNKCSRQDTECKFAHPPA and NGKVTACYDSIKGRCNRDKPPCKYFHPPQ.

Belongs to the muscleblind family. Expressed in embryonic muscle cells.

It localises to the nucleus. Required for terminal differentiation of photoreceptor cells. Vital for embryonic development. The polypeptide is Protein muscleblind (mbl) (Drosophila melanogaster (Fruit fly)).